The sequence spans 179 residues: FAD-dependent monooxygenase nscC (179 aa).

An N-terminal signal peptide occupies residues 1–21 (MGKQQETILIIGAGISGLATS). FAD contacts are provided by glutamate 35 and alanine 46. N-linked (GlcNAc...) asparagine glycosylation is present at asparagine 92. Arginine 119 serves as a coordination point for FAD. The N-linked (GlcNAc...) asparagine glycan is linked to asparagine 170.

It belongs to the paxM FAD-dependent monooxygenase family. It depends on FAD as a cofactor.

The protein operates within secondary metabolite biosynthesis. FAD-dependent monooxygenase; part of the gene cluster that mediates the biosynthesis of neosartoricin B, a prenylated anthracenone that probably exhibits T-cell antiproliferative activity, suggestive of a physiological role as an immunosuppressive agent. The non-reducing polyketide synthase nscA probably synthesizes and cyclizes the decaketide backbone. The hydrolase nscB then mediates the product release through hydrolysis followed by spontaneous decarboxylation. The prenyltransferase nscD catalyzes the addition of the dimethylallyl group to the aromatic C5. The FAD-dependent monooxygenase nscC is then responsible for the stereospecific hydroxylation at C2. Neosartoricin B can be converted into two additional compounds neosartoricins C and D. Neosartoricin C is a spirocyclic compound that is cyclized through the attack of C3 hydroxyl on C14, followed by dehydration. On the other hand, neosartoricin D is a further cyclized compound in which attack of C2 on C14 in neosartoricin C results in the formation of the acetal-containing dioxabicyclo-octanone ring. Both of these compounds are novel and possibly represent related metabolites of the gene cluster. The sequence is that of FAD-dependent monooxygenase nscC from Trichophyton equinum (strain ATCC MYA-4606 / CBS 127.97) (Horse ringworm fungus).